Here is a 277-residue protein sequence, read N- to C-terminus: MEIISGSQIAQEIRQKLKEKNEREGISPCLAMILVGGQKEDLHYVGLKEKAATATGGKSRLLHLPEDTSQQELMAKIAELNQDEQVDGILLQLPLPAALEEQTDEILAAIRPDKDVDGFSLVNRGRMSGDRPGFISCAALACLEVIERFFPSLAGKKAVLVGDSFDLIIPLATIMIKRACQLSVLPSYEPGLASGADILVVEKGRAGIVQAEGLAPGVLIIDAGFYWGAGGVCGNVDRAALERQGFEARLLPVPGGMGPILIAKLMENLAQAARQKR.

Residues 162–164 (GDS) and S187 each bind NADP(+).

It belongs to the tetrahydrofolate dehydrogenase/cyclohydrolase family. Homodimer.

The enzyme catalyses (6R)-5,10-methylene-5,6,7,8-tetrahydrofolate + NADP(+) = (6R)-5,10-methenyltetrahydrofolate + NADPH. The catalysed reaction is (6R)-5,10-methenyltetrahydrofolate + H2O = (6R)-10-formyltetrahydrofolate + H(+). It functions in the pathway one-carbon metabolism; tetrahydrofolate interconversion. Its function is as follows. Catalyzes the oxidation of 5,10-methylenetetrahydrofolate to 5,10-methenyltetrahydrofolate and then the hydrolysis of 5,10-methenyltetrahydrofolate to 10-formyltetrahydrofolate. This is Bifunctional protein FolD 1 from Syntrophomonas wolfei subsp. wolfei (strain DSM 2245B / Goettingen).